The chain runs to 34 residues: Histone H1, sperm (34 aa).

The interval P1–P34 is disordered. Over residues A9–P34 the composition is skewed to basic residues.

It belongs to the histone H1/H5 family. In terms of tissue distribution, sperm.

The protein resides in the nucleus. Its subcellular location is the chromosome. In terms of biological role, histones H1 are necessary for the condensation of nucleosome chains into higher-order structures. The polypeptide is Histone H1, sperm (Strongylocentrotus purpuratus (Purple sea urchin)).